The chain runs to 226 residues: Isoprenyl transferase (226 aa).

Residue D12 is part of the active site. A Mg(2+)-binding site is contributed by D12. Residues 13–16, W17, K25, H29, and 57–59 each bind substrate; these read GNAR and SSE. N60 serves as the catalytic Proton acceptor. Residues W61, R63, R174, and 180-182 contribute to the substrate site; that span reads RIS. E193 serves as a coordination point for Mg(2+).

This sequence belongs to the UPP synthase family. In terms of assembly, homodimer. Mg(2+) serves as cofactor.

Its function is as follows. Catalyzes the condensation of isopentenyl diphosphate (IPP) with allylic pyrophosphates generating different type of terpenoids. The chain is Isoprenyl transferase from Rickettsia typhi (strain ATCC VR-144 / Wilmington).